Here is a 2144-residue protein sequence, read N- to C-terminus: HEAT repeat-containing protein 1 (2144 aa).

M1 carries the post-translational modification N-acetylmethionine. T2 carries the N-acetylthreonine; in HEAT repeat-containing protein 1, N-terminally processed modification. The residue at position 516 (S516) is a Phosphoserine. The HEAT 1 repeat unit spans residues 913-951 (ASISSPVVTSLLINLGSPVKEVRRAAIQCLQALSGVASP). The disordered stretch occupies residues 1170 to 1191 (KAKPLGTVQQKRRQKMQQKKSQ). S1190 carries the phosphoserine modification. One copy of the HEAT 2 repeat lies at 1347 to 1385 (NKTVKMVIPALIQSDSGDSIEVSRNVEEIVVKIISVFVD). S1492 carries the phosphoserine modification. 3 HEAT repeats span residues 1594–1632 (LLPTETFIPVIRGLVGNPLPSVRRKALDLLNNKLQQNIS), 1730–1770 (IPQL…VVET), and 2100–2138 (IVLLPESIPFLAELMEDECEEVEHQCQKTIQQLETVLGE).

The protein belongs to the HEATR1/UTP10 family. As to quaternary structure, part of the small subunit (SSU) processome, composed of more than 70 proteins and the RNA chaperone small nucleolar RNA (snoRNA) U3. Interacts with MYC; the interaction is required for localization of MYC to the nucleolus.

It localises to the nucleus. The protein localises to the nucleolus. Its function is as follows. Ribosome biogenesis factor; required for recruitment of Myc to nucleoli. Involved in nucleolar processing of pre-18S ribosomal RNA. Required for optimal pre-ribosomal RNA transcription by RNA polymerase I. Part of the small subunit (SSU) processome, first precursor of the small eukaryotic ribosomal subunit. During the assembly of the SSU processome in the nucleolus, many ribosome biogenesis factors, an RNA chaperone and ribosomal proteins associate with the nascent pre-rRNA and work in concert to generate RNA folding, modifications, rearrangements and cleavage as well as targeted degradation of pre-ribosomal RNA by the RNA exosome. Involved in neuronal-lineage cell proliferation. This chain is HEAT repeat-containing protein 1, found in Homo sapiens (Human).